We begin with the raw amino-acid sequence, 456 residues long: Bifunctional protein GlmU (456 aa).

The pyrophosphorylase stretch occupies residues 1–229 (MTKKALSAVI…VMEVEGANNR (229 aa)). UDP-N-acetyl-alpha-D-glucosamine contacts are provided by residues 11 to 14 (LAAG), Lys25, Gln76, 81 to 82 (GT), 103 to 105 (YGD), Gly140, Glu154, Asn169, and Asn227. Asp105 contacts Mg(2+). Asn227 contacts Mg(2+). Residues 230-250 (LQLAALERYLQNKQASKLLLE) form a linker region. The N-acetyltransferase stretch occupies residues 251–456 (GVMIYDPARF…QGWQRPIKKK (206 aa)). 2 residues coordinate UDP-N-acetyl-alpha-D-glucosamine: Arg333 and Lys351. His363 (proton acceptor) is an active-site residue. UDP-N-acetyl-alpha-D-glucosamine-binding residues include Tyr366 and Asn377. Residues Ala380, 386–387 (NY), Ser405, Ala423, and Arg440 each bind acetyl-CoA.

It in the N-terminal section; belongs to the N-acetylglucosamine-1-phosphate uridyltransferase family. This sequence in the C-terminal section; belongs to the transferase hexapeptide repeat family. In terms of assembly, homotrimer. Mg(2+) serves as cofactor.

The protein resides in the cytoplasm. It carries out the reaction alpha-D-glucosamine 1-phosphate + acetyl-CoA = N-acetyl-alpha-D-glucosamine 1-phosphate + CoA + H(+). It catalyses the reaction N-acetyl-alpha-D-glucosamine 1-phosphate + UTP + H(+) = UDP-N-acetyl-alpha-D-glucosamine + diphosphate. Its pathway is nucleotide-sugar biosynthesis; UDP-N-acetyl-alpha-D-glucosamine biosynthesis; N-acetyl-alpha-D-glucosamine 1-phosphate from alpha-D-glucosamine 6-phosphate (route II): step 2/2. The protein operates within nucleotide-sugar biosynthesis; UDP-N-acetyl-alpha-D-glucosamine biosynthesis; UDP-N-acetyl-alpha-D-glucosamine from N-acetyl-alpha-D-glucosamine 1-phosphate: step 1/1. It participates in bacterial outer membrane biogenesis; LPS lipid A biosynthesis. Functionally, catalyzes the last two sequential reactions in the de novo biosynthetic pathway for UDP-N-acetylglucosamine (UDP-GlcNAc). The C-terminal domain catalyzes the transfer of acetyl group from acetyl coenzyme A to glucosamine-1-phosphate (GlcN-1-P) to produce N-acetylglucosamine-1-phosphate (GlcNAc-1-P), which is converted into UDP-GlcNAc by the transfer of uridine 5-monophosphate (from uridine 5-triphosphate), a reaction catalyzed by the N-terminal domain. This is Bifunctional protein GlmU from Haemophilus influenzae (strain PittGG).